The sequence spans 251 residues: Triosephosphate isomerase (251 aa).

Residue 9 to 11 coordinates substrate; sequence NWK. His-95 functions as the Electrophile in the catalytic mechanism. Glu-167 acts as the Proton acceptor in catalysis. Residues Gly-173, Ser-212, and 233–234 contribute to the substrate site; that span reads GG.

The protein belongs to the triosephosphate isomerase family. As to quaternary structure, homodimer.

It localises to the cytoplasm. The enzyme catalyses D-glyceraldehyde 3-phosphate = dihydroxyacetone phosphate. Its pathway is carbohydrate biosynthesis; gluconeogenesis. The protein operates within carbohydrate degradation; glycolysis; D-glyceraldehyde 3-phosphate from glycerone phosphate: step 1/1. Involved in the gluconeogenesis. Catalyzes stereospecifically the conversion of dihydroxyacetone phosphate (DHAP) to D-glyceraldehyde-3-phosphate (G3P). The sequence is that of Triosephosphate isomerase from Pseudomonas aeruginosa (strain LESB58).